The primary structure comprises 50 residues: Mating-type pheromone BAP1(3) (50 aa).

Cys47 carries the cysteine methyl ester modification. A lipid anchor (S-farnesyl cysteine) is attached at Cys47. The propeptide at 48–50 (VVA) is removed in mature form.

It is found in the cell membrane. Activates B-regulated development. The protein is Mating-type pheromone BAP1(3) (BAP1(3)) of Schizophyllum commune (Split gill fungus).